The primary structure comprises 975 residues: E3 ubiquitin-protein ligase BRE1A (975 aa).

A disordered region spans residues 1-37; that stretch reads MSGIGSKRAAGEPGTSVPPEKKTAVEDSGTTVETIKL. An N6-acetyllysine modification is found at K21. Residue S41 is modified to Phosphoserine. Residues 43-90 are a coiled coil; the sequence is TEELDIRTLQTKNRKLAEMLDQRQAIEDELREHIEKLERRQATDDASL. Residues 125-155 form a disordered region; the sequence is KALVVPEPEPDSDSNQERKDDRERGEGQEPA. Phosphoserine is present on residues S136 and S138. The segment covering 139 to 151 has biased composition (basic and acidic residues); sequence NQERKDDRERGEG. Coiled-coil stretches lie at residues 168 to 375 and 429 to 898; these read EEME…EEVV and SLHK…TTKK. An N6-acetyllysine mark is found at K348 and K510. Positions 507–622 are disordered; sequence DLNKTRLRSG…GKHDDGRKKE (116 aa). S522 is modified (phosphoserine). A compositionally biased stretch (basic and acidic residues) spans 527–540; the sequence is EDPKDEPAELKQDS. Residues 543–552 show a composition bias toward polar residues; that stretch reads LATQSAASKA. Over residues 558–622 the composition is skewed to basic and acidic residues; sequence NEIKSKRDEE…GKHDDGRKKE (65 aa). Position 562 is a phosphoserine (S562). The RING-type zinc finger occupies 922–961; that stretch reads CPCCNMRKKDAVLTKCFHVFCFECVKTRYDTRQRKCPKCN.

It belongs to the BRE1 family. In terms of assembly, component of the RNF20/40 complex (also known as BRE1 complex) probably composed of 2 copies of RNF20/BRE1A and 2 copies of RNF40/BRE1B. Interacts with UBE2E1/UBCH6. Interacts with p53/TP53 and WAC. Interacts with PAF1; the interaction mediates the association of the PAF1 and RNF20/40 complexes which is a prerequsite for recruitment of UBE2A/B. Interacts with PA2G4. Interacts with FBXL19.

It is found in the nucleus. It catalyses the reaction S-ubiquitinyl-[E2 ubiquitin-conjugating enzyme]-L-cysteine + [acceptor protein]-L-lysine = [E2 ubiquitin-conjugating enzyme]-L-cysteine + N(6)-ubiquitinyl-[acceptor protein]-L-lysine.. It participates in protein modification; protein ubiquitination. Functionally, component of the RNF20/40 E3 ubiquitin-protein ligase complex that mediates monoubiquitination of 'Lys-120' of histone H2B (H2BK120ub1). H2BK120ub1 gives a specific tag for epigenetic transcriptional activation and is also prerequisite for histone H3 'Lys-4' and 'Lys-79' methylation (H3K4me and H3K79me, respectively). It thereby plays a central role in histone code and gene regulation. The RNF20/40 complex forms a H2B ubiquitin ligase complex in cooperation with the E2 enzyme UBE2A or UBE2B; reports about the cooperation with UBE2E1/UBCH are contradictory. Required for transcriptional activation of Hox genes. Recruited to the MDM2 promoter, probably by being recruited by p53/TP53, and thereby acts as a transcriptional coactivator. Mediates the polyubiquitination of PA2G4 leading to its proteasome-mediated degradation. The protein is E3 ubiquitin-protein ligase BRE1A (RNF20) of Bos taurus (Bovine).